The chain runs to 151 residues: Transcription antitermination protein NusB (151 aa).

It belongs to the NusB family.

In terms of biological role, involved in transcription antitermination. Required for transcription of ribosomal RNA (rRNA) genes. Binds specifically to the boxA antiterminator sequence of the ribosomal RNA (rrn) operons. This is Transcription antitermination protein NusB from Hamiltonella defensa subsp. Acyrthosiphon pisum (strain 5AT).